The primary structure comprises 297 residues: Large ribosomal subunit protein uL18 (297 aa).

Residue glycine 2 is modified to N-acetylglycine. N6-acetyllysine is present on residues lysine 5 and lysine 48. Serine 185 carries the post-translational modification Phosphoserine. At lysine 220 the chain carries N6-acetyllysine; alternate. Lysine 220 is covalently cross-linked (Glycyl lysine isopeptide (Lys-Gly) (interchain with G-Cter in SUMO1); alternate). A Glycyl lysine isopeptide (Lys-Gly) (interchain with G-Cter in SUMO2); alternate cross-link involves residue lysine 220. Position 232 is a phosphothreonine (threonine 232). The interval 253–297 (YEKKPKREVKKKRWNRPKMSLAQKKDRVAQKKASFLRAQERAAES) is disordered. Basic residues predominate over residues 258-268 (KREVKKKRWNR). Serine 272 carries the post-translational modification Phosphoserine.

This sequence belongs to the universal ribosomal protein uL18 family. In terms of assembly, component of the large ribosomal subunit (LSU). Part of the 5S RNP complex, which is a LSU subcomplex composed of the 5S RNA, RPL5 and RPL11. Component of a hexameric 5S RNP precursor complex, composed of 5S RNA, RRS1, RPF2/BXDC1, RPL5, RPL11 and HEATR3; this complex acts as a precursor for ribosome assembly. Interacts with NVL in an ATP-dependent manner. Interacts with RRP1B. Interacts with IPO5, IPO7 and KPNB1; these interactions may be involved in RPL5 nuclear import for the assembly of ribosomal subunits. Interacts with RRP1B.

The protein localises to the cytoplasm. Its subcellular location is the nucleus. The protein resides in the nucleolus. Component of the ribosome, a large ribonucleoprotein complex responsible for the synthesis of proteins in the cell. The small ribosomal subunit (SSU) binds messenger RNAs (mRNAs) and translates the encoded message by selecting cognate aminoacyl-transfer RNA (tRNA) molecules. The large subunit (LSU) contains the ribosomal catalytic site termed the peptidyl transferase center (PTC), which catalyzes the formation of peptide bonds, thereby polymerizing the amino acids delivered by tRNAs into a polypeptide chain. The nascent polypeptides leave the ribosome through a tunnel in the LSU and interact with protein factors that function in enzymatic processing, targeting, and the membrane insertion of nascent chains at the exit of the ribosomal tunnel. As part of the 5S RNP/5S ribonucleoprotein particle it is an essential component of the LSU, required for its formation and the maturation of rRNAs. It also couples ribosome biogenesis to p53/TP53 activation. As part of the 5S RNP it accumulates in the nucleoplasm and inhibits MDM2, when ribosome biogenesis is perturbed, mediating the stabilization and the activation of TP53. The polypeptide is Large ribosomal subunit protein uL18 (Rpl5) (Rattus norvegicus (Rat)).